The following is a 211-amino-acid chain: FMN-dependent NADH:quinone oxidoreductase 2 (211 aa).

FMN is bound by residues serine 10 and serine 17–serine 19.

Belongs to the azoreductase type 1 family. In terms of assembly, homodimer. FMN is required as a cofactor.

It carries out the reaction 2 a quinone + NADH + H(+) = 2 a 1,4-benzosemiquinone + NAD(+). The enzyme catalyses N,N-dimethyl-1,4-phenylenediamine + anthranilate + 2 NAD(+) = 2-(4-dimethylaminophenyl)diazenylbenzoate + 2 NADH + 2 H(+). Functionally, quinone reductase that provides resistance to thiol-specific stress caused by electrophilic quinones. Also exhibits azoreductase activity. Catalyzes the reductive cleavage of the azo bond in aromatic azo compounds to the corresponding amines. The protein is FMN-dependent NADH:quinone oxidoreductase 2 of Listeria monocytogenes serovar 1/2a (strain ATCC BAA-679 / EGD-e).